A 355-amino-acid polypeptide reads, in one-letter code: Plasmodial-specific protein LAV1-2 (355 aa).

EF-hand domains are found at residues 151–186 (EDTN…YADT) and 217–252 (NDLA…LGFD). Residues aspartate 230, asparagine 232, asparagine 234, threonine 236, glutamate 241, aspartate 265, aspartate 267, serine 269, aspartate 271, glutamate 276, aspartate 295, aspartate 297, serine 299, glutamine 301, glutamate 306, aspartate 332, aspartate 334, serine 336, serine 338, and glutamate 343 each coordinate Ca(2+). 2 EF-hand domains span residues 282 to 317 (LCLL…AHIP) and 319 to 354 (SARK…MFHD).

This chain is Plasmodial-specific protein LAV1-2, found in Physarum polycephalum (Slime mold).